A 667-amino-acid chain; its full sequence is DNA ligase (667 aa).

NAD(+) is bound by residues aspartate 32–aspartate 36, serine 81–leucine 82, and glutamate 111. Residue lysine 113 is the N6-AMP-lysine intermediate of the active site. The NAD(+) site is built by arginine 134, glutamate 168, lysine 285, and lysine 309. Zn(2+) is bound by residues cysteine 403, cysteine 406, cysteine 421, and cysteine 426. The region spanning valine 588–isoleucine 667 is the BRCT domain.

This sequence belongs to the NAD-dependent DNA ligase family. LigA subfamily. The cofactor is Mg(2+). Requires Mn(2+) as cofactor.

The catalysed reaction is NAD(+) + (deoxyribonucleotide)n-3'-hydroxyl + 5'-phospho-(deoxyribonucleotide)m = (deoxyribonucleotide)n+m + AMP + beta-nicotinamide D-nucleotide.. DNA ligase that catalyzes the formation of phosphodiester linkages between 5'-phosphoryl and 3'-hydroxyl groups in double-stranded DNA using NAD as a coenzyme and as the energy source for the reaction. It is essential for DNA replication and repair of damaged DNA. This is DNA ligase from Lysinibacillus sphaericus (strain C3-41).